The sequence spans 201 residues: FMN-dependent NADH:quinone oxidoreductase (201 aa).

92–95 provides a ligand contact to FMN; the sequence is MWNL.

This sequence belongs to the azoreductase type 1 family. As to quaternary structure, homodimer. The cofactor is FMN.

The enzyme catalyses 2 a quinone + NADH + H(+) = 2 a 1,4-benzosemiquinone + NAD(+). The catalysed reaction is N,N-dimethyl-1,4-phenylenediamine + anthranilate + 2 NAD(+) = 2-(4-dimethylaminophenyl)diazenylbenzoate + 2 NADH + 2 H(+). Its function is as follows. Quinone reductase that provides resistance to thiol-specific stress caused by electrophilic quinones. In terms of biological role, also exhibits azoreductase activity. Catalyzes the reductive cleavage of the azo bond in aromatic azo compounds to the corresponding amines. The sequence is that of FMN-dependent NADH:quinone oxidoreductase from Caldicellulosiruptor saccharolyticus (strain ATCC 43494 / DSM 8903 / Tp8T 6331).